Reading from the N-terminus, the 62-residue chain is EKKDEYLSKSSASAAPVIDTLAHGYGKVLGKGRLPEVPVIVKARFVSKLAEEKSESLVVLSN.

This sequence belongs to the universal ribosomal protein uL15 family.

This is Large ribosomal subunit protein uL15 (RPL28) from Candida albicans (Yeast).